Here is a 288-residue protein sequence, read N- to C-terminus: Putative N-terminal acetyltransferase 2 (288 aa).

The tract at residues 68-90 (TEEKSSQFDENKSKSNNGKKNEP) is disordered.

In terms of assembly, heterooligomeric.

Its subcellular location is the cytoplasm. Its function is as follows. Maybe involved in N-terminal acetylation of proteins. N-acetylation plays a role in normal eukaryotic translation and processing, protect against proteolytic degradation and protein turnover. The sequence is that of Putative N-terminal acetyltransferase 2 (NAT2) from Saccharomyces cerevisiae (strain ATCC 204508 / S288c) (Baker's yeast).